The primary structure comprises 106 residues: UPF0145 protein SCO3412 (106 aa).

Belongs to the UPF0145 family.

This is UPF0145 protein SCO3412 from Streptomyces coelicolor (strain ATCC BAA-471 / A3(2) / M145).